Consider the following 234-residue polypeptide: Accessory gland protein Acp29AB (234 aa).

The signal sequence occupies residues 1 to 21 (MYASNLLYLLALWNLWDLSGG). N-linked (GlcNAc...) asparagine glycans are attached at residues Asn-61 and Asn-164. The C-type lectin domain maps to 137–234 (VTCRKMNGHL…SFVCQADQWA (98 aa)). Intrachain disulfides connect Cys-139–Cys-228 and Cys-207–Cys-220.

In terms of tissue distribution, main cells of the accessory gland and in seminal fluid.

It localises to the secreted. In terms of biological role, responsible for physiological and behavioral changes in mated female flies. In Drosophila melanogaster (Fruit fly), this protein is Accessory gland protein Acp29AB (Acp29AB).